Here is a 406-residue protein sequence, read N- to C-terminus: Endoglucanase 1 (406 aa).

Residues 1–43 form the signal peptide; sequence MNSKKIGAMIAAAVLSLIVMTPAATRKIVQRQTRNSSTAVENS. 2 stretches are compositionally biased toward polar residues: residues 30–41 and 51–62; these read QRQTRNSSTAVE and ENVPVSQTHTND. Residues 30–62 form a disordered region; that stretch reads QRQTRNSSTAVENSAADESETENVPVSQTHTND. The active-site Proton donor is the Glu-210. Catalysis depends on Glu-330, which acts as the Nucleophile.

It belongs to the glycosyl hydrolase 5 (cellulase A) family.

The enzyme catalyses Endohydrolysis of (1-&gt;4)-beta-D-glucosidic linkages in cellulose, lichenin and cereal beta-D-glucans.. The protein is Endoglucanase 1 (Eg I) of Ruminococcus albus.